The chain runs to 334 residues: Adenine deaminase (334 aa).

Zn(2+)-binding residues include H14, H16, and H194. Residue E197 is the Proton donor of the active site. D275 contributes to the Zn(2+) binding site. D276 contacts substrate.

The protein belongs to the metallo-dependent hydrolases superfamily. Adenosine and AMP deaminases family. Adenine deaminase type 2 subfamily. Requires Zn(2+) as cofactor.

It carries out the reaction adenine + H2O + H(+) = hypoxanthine + NH4(+). Catalyzes the hydrolytic deamination of adenine to hypoxanthine. Plays an important role in the purine salvage pathway and in nitrogen catabolism. This is Adenine deaminase from Hahella chejuensis (strain KCTC 2396).